Consider the following 648-residue polypeptide: 5-aminolevulinate synthase, mitochondrial (648 aa).

The transit peptide at 1-26 (MEALLQQSRAMCPFLKRSSPNTLRSL) directs the protein to the mitochondrion. The interval 69–109 (KRFTSSAAGVPGAGAGTPKPTRGSPGKRALHSTGGNGANMS) is disordered. R170, S283, and K302 together coordinate substrate. S335, H363, and T409 together coordinate pyridoxal 5'-phosphate. The active site involves K412. An N6-(pyridoxal phosphate)lysine modification is found at K412. Pyridoxal 5'-phosphate-binding residues include T441 and T442. T527 lines the substrate pocket.

The protein belongs to the class-II pyridoxal-phosphate-dependent aminotransferase family. As to quaternary structure, homodimer. The cofactor is pyridoxal 5'-phosphate.

The protein localises to the mitochondrion matrix. The catalysed reaction is succinyl-CoA + glycine + H(+) = 5-aminolevulinate + CO2 + CoA. It functions in the pathway porphyrin-containing compound metabolism; protoporphyrin-IX biosynthesis; 5-aminolevulinate from glycine: step 1/1. In terms of biological role, catalyzes the synthesis of 5-aminolevulinate (ALA) from succinyl-CoA and glycine, the first and rate-limiting step in heme biosynthesis. The protein is 5-aminolevulinate synthase, mitochondrial (hemA) of Emericella nidulans (strain FGSC A4 / ATCC 38163 / CBS 112.46 / NRRL 194 / M139) (Aspergillus nidulans).